Consider the following 155-residue polypeptide: MSRRGTAEEKTAKSDPIYRNRLVNMLVNRILKHGKKSLAYQIIYRAVKKIQQKTETNPLSVLRQAIRGVTPDIAVKARRVGGSTHQVPIEIGSTQGKALAIRWLLGASRKRPGRNMAFKLSSELVDAAKGSGDAIRKKEETHRMAEANRAFAHFR.

This sequence belongs to the universal ribosomal protein uS7 family. In terms of assembly, part of the 30S ribosomal subunit.

It localises to the plastid. Its subcellular location is the chloroplast. Functionally, one of the primary rRNA binding proteins, it binds directly to 16S rRNA where it nucleates assembly of the head domain of the 30S subunit. The sequence is that of Small ribosomal subunit protein uS7cz/uS7cy (rps7-A) from Drimys granadensis.